The primary structure comprises 210 residues: ATP-dependent Clp protease proteolytic subunit 1 (210 aa).

S106 functions as the Nucleophile in the catalytic mechanism. The active site involves H131.

Belongs to the peptidase S14 family. In terms of assembly, fourteen ClpP subunits assemble into 2 heptameric rings which stack back to back to give a disk-like structure with a central cavity, resembling the structure of eukaryotic proteasomes.

The protein resides in the cytoplasm. The catalysed reaction is Hydrolysis of proteins to small peptides in the presence of ATP and magnesium. alpha-casein is the usual test substrate. In the absence of ATP, only oligopeptides shorter than five residues are hydrolyzed (such as succinyl-Leu-Tyr-|-NHMec, and Leu-Tyr-Leu-|-Tyr-Trp, in which cleavage of the -Tyr-|-Leu- and -Tyr-|-Trp bonds also occurs).. Cleaves peptides in various proteins in a process that requires ATP hydrolysis. Has a chymotrypsin-like activity. Plays a major role in the degradation of misfolded proteins. This is ATP-dependent Clp protease proteolytic subunit 1 from Chelativorans sp. (strain BNC1).